Reading from the N-terminus, the 516-residue chain is uncharacterized protein (516 aa).

PFTB repeat units lie at residues 45 to 86 (RQDA…QRAD) and 401 to 443 (DERA…DGSE).

This is an uncharacterized protein from Bradyrhizobium diazoefficiens (strain JCM 10833 / BCRC 13528 / IAM 13628 / NBRC 14792 / USDA 110).